A 514-amino-acid polypeptide reads, in one-letter code: Protein spinster homolog 3 (514 aa).

The tract at residues 1-22 is disordered; the sequence is MSTECLKPQTGGPQSQSLSQGG. Residues 9-21 are compositionally biased toward low complexity; sequence QTGGPQSQSLSQG. The next 12 membrane-spanning stretches (helical) occupy residues 54-74, 88-108, 116-136, 149-169, 176-196, 212-232, 264-284, 313-333, 347-367, 376-396, 415-435, and 453-473; these read VLCY…GVLL, GLLQ…FGYL, AILS…SFIS, FVGT…GDLF, CALA…YVLG, LMPC…PDVP, FVFS…LGFW, LIFG…GAEA, LICA…LILA, VFLA…ADIL, VAHV…SSVL, and SFLC…LTAL. Residues 482–514 are disordered; it reads ARQPGKGTLDSKDIASRNTESQGLLSGTSTPTE. Over residues 497–514 the composition is skewed to polar residues; it reads SRNTESQGLLSGTSTPTE.

The protein belongs to the major facilitator superfamily. Spinster (TC 2.A.1.49) family.

The protein localises to the membrane. Sphingolipid transporter. In Mus musculus (Mouse), this protein is Protein spinster homolog 3 (Spns3).